The sequence spans 136 residues: Large ribosomal subunit protein uL16 (136 aa).

Belongs to the universal ribosomal protein uL16 family. Part of the 50S ribosomal subunit.

Functionally, binds 23S rRNA and is also seen to make contacts with the A and possibly P site tRNAs. This chain is Large ribosomal subunit protein uL16, found in Shewanella sediminis (strain HAW-EB3).